The sequence spans 60 residues: MAQLKVQQKKGVVGIKANQRETLRTLGLKRIGDVVVKEDRPEIRGMVNTVRHLVTVEEVE.

Belongs to the universal ribosomal protein uL30 family. As to quaternary structure, part of the 50S ribosomal subunit.

In Nocardioides sp. (strain ATCC BAA-499 / JS614), this protein is Large ribosomal subunit protein uL30.